The primary structure comprises 330 residues: GMP reductase (330 aa).

The active-site Thioimidate intermediate is the C180. 209-232 (LIADGGIRHNGDIAKSVRFGASMV) provides a ligand contact to NADP(+).

Belongs to the IMPDH/GMPR family. GuaC type 2 subfamily.

The catalysed reaction is IMP + NH4(+) + NADP(+) = GMP + NADPH + 2 H(+). Catalyzes the irreversible NADPH-dependent deamination of GMP to IMP. It functions in the conversion of nucleobase, nucleoside and nucleotide derivatives of G to A nucleotides, and in maintaining the intracellular balance of A and G nucleotides. The polypeptide is GMP reductase (Lactobacillus gasseri (strain ATCC 33323 / DSM 20243 / BCRC 14619 / CIP 102991 / JCM 1131 / KCTC 3163 / NCIMB 11718 / NCTC 13722 / AM63)).